A 391-amino-acid chain; its full sequence is Homocysteine-responsive endoplasmic reticulum-resident ubiquitin-like domain member 1 protein (391 aa).

Met-1 bears the N-acetylmethionine mark. Topologically, residues 1–263 (MEPEPQPEPV…VEEDDEINRD (263 aa)) are cytoplasmic. In terms of domain architecture, Ubiquitin-like spans 10 to 72 (VTLLVKSPNQ…LLDHQCLQDL (63 aa)). The interval 90–126 (NPSKMPETSTKGAESTEQPDNSNQTQHPGDSSSDGLR) is disordered. Over residues 95–124 (PETSTKGAESTEQPDNSNQTQHPGDSSSDG) the composition is skewed to polar residues. Residues 115–200 (QHPGDSSSDG…ASGTFVPTPS (86 aa)) are interaction with UBQLN1. Ser-135 bears the Phosphoserine mark. The helical transmembrane segment at 264–284 (WLDWTYSAATFSVFLSILYFY) threads the bilayer. Over 285 to 289 (SSLSR) the chain is Lumenal. The chain crosses the membrane as a helical span at residues 290-310 (FLMVMGATVVMYLHHVGWFPF). Topologically, residues 311 to 391 (RQRPVQNFPD…LPEGPPALAN (81 aa)) are cytoplasmic. A disordered region spans residues 317–361 (NFPDDGGPRDAANQDPNNNLQGGMDPEMEDPNRLPPDREVLDPEH). Positions 346 to 361 (DPNRLPPDREVLDPEH) are enriched in basic and acidic residues.

In terms of assembly, interacts with PSEN1 and PSEN2. Interacts with UBXN6. Interacts with UBQLN1, UBQLN2 and UBQLN4. Component of the HRD1 complex, which comprises at least SYNV1/HRD1, FAM8A1, HERPUD1/HERP, OS9, SEL1L and UBE2J1. FAM8A1 binding to SYNV1 may promote recruitment of HERPUD1 to the HRD1 complex.

The protein resides in the endoplasmic reticulum membrane. Component of the endoplasmic reticulum quality control (ERQC) system also called ER-associated degradation (ERAD) involved in ubiquitin-dependent degradation of misfolded endoplasmic reticulum proteins. Binds to ubiquilins and this interaction is required for efficient degradation of CD3D via the ERAD pathway. In Mus musculus (Mouse), this protein is Homocysteine-responsive endoplasmic reticulum-resident ubiquitin-like domain member 1 protein (Herpud1).